The sequence spans 502 residues: MVLLAAIDQGTSSSRFLVFEADTGELVTSHQIEVRQLFPHGGWVEMDPMELYDTVVSCISKTIEKLENLGISADEIKSVGVANQRETSIVWDKETGKPLYNAIVWLDTRTSSLADEAISRTASKSKDEFRAKTGLPIHPYFSALKLKWLFQNVPEVKKAYADGNLMFGTVDTWLIWKLTGAYVTDVSNASRTLLLDLHKRKWSTQLCEFFDLPIEILPEIRSSAEVYGHFDKGPLEGVPLSGCLGDQQAAMVGHQCLNAGQTKNTYGTGTFMLCNIGTRPIISKNGLLTTVGFQFGADSPVVYALEGSGSIGGNVVRFLRDNFKFISDAKEMEGLCRSVEDTSGAYFVPSFTGLYTPYWDSTARGTILGLTQVTQREHICLAALRAVAFQSAEMIAAVEQDLEGGTKVTTLKVDGGMIANKLFNEIQADIMGRDIVTPKITEISGWGAAVAGGIGAQQISLDEFLQQSSEDNRYTPQKDDNWRSAELARWKEAVKRSCGWAQ.

Thr-11 is a substrate binding site. Arg-15 is a binding site for ATP. Positions 85, 140, and 246 each coordinate substrate. Residues Thr-268, Gly-313, and 416–420 contribute to the ATP site; that span reads GMIAN.

This sequence belongs to the FGGY kinase family.

The enzyme catalyses glycerol + ATP = sn-glycerol 3-phosphate + ADP + H(+). Its pathway is polyol metabolism; glycerol degradation via glycerol kinase pathway; sn-glycerol 3-phosphate from glycerol: step 1/1. The polypeptide is Probable glycerol kinase (Caenorhabditis elegans).